Here is a 137-residue protein sequence, read N- to C-terminus: MAIARRISRIASLIKQEISQMLLHGIKDNRVGIGMVSVTDVDVSGDLQHAKVFVSIYGSDEVRSQTMAGLRSATGYVRSELGKRIRMRRTPEVIFVEDRSLERGTEILSLLNKLSQERQQQEIEDITHKESHQDTIE.

It belongs to the RbfA family. Monomer. Binds 30S ribosomal subunits, but not 50S ribosomal subunits or 70S ribosomes.

The protein resides in the cytoplasm. Its function is as follows. One of several proteins that assist in the late maturation steps of the functional core of the 30S ribosomal subunit. Associates with free 30S ribosomal subunits (but not with 30S subunits that are part of 70S ribosomes or polysomes). Required for efficient processing of 16S rRNA. May interact with the 5'-terminal helix region of 16S rRNA. The chain is Ribosome-binding factor A from Trichodesmium erythraeum (strain IMS101).